Here is a 115-residue protein sequence, read N- to C-terminus: Protein Rev (115 aa).

Phosphoserine; by host CK2 is present on residues Ser-5 and Ser-8. Residues 18-26 (LIKFLYQSN) form a homomultimerization region. Residues 23–48 (YQSNPPPSSEGTRQARRNRRRRWRER) are disordered. The Nuclear localization signal and RNA-binding (RRE) motif lies at 34 to 50 (TRQARRNRRRRWRERQR). Over residues 36-48 (QARRNRRRRWRER) the composition is skewed to basic residues. The Nuclear export signal and binding to XPO1 signature appears at 73 to 83 (LQLPPQRLTLD). The tract at residues 89–115 (GTSGTQGVGSPQILVESPTVLESGTKE) is disordered. Residues Ser-91 and Ser-98 each carry the phosphoserine; by host modification.

Belongs to the HIV-1 REV protein family. In terms of assembly, homomultimer; when bound to the RRE. Multimeric assembly is essential for activity and may involve XPO1. Binds to human KPNB1, XPO1, TNPO1, RANBP5 and IPO7. Interacts with the viral Integrase. Interacts with human KHDRBS1. Interacts with human NAP1; this interaction decreases Rev multimerization and stimulates its activity. Interacts with human DEAD-box helicases DDX3 and DDX24; these interactions may serve for viral RNA export to the cytoplasm and packaging, respectively. Interacts with human PSIP1; this interaction may inhibit HIV-1 DNA integration by promoting dissociation of the Integrase-LEDGF/p75 complex. In terms of processing, asymmetrically arginine dimethylated at one site by host PRMT6. Methylation impairs the RNA-binding activity and export of viral RNA from the nucleus to the cytoplasm. Post-translationally, phosphorylated by protein kinase CK2. Presence of, and maybe binding to the N-terminus of the regulatory beta subunit of CK2 is necessary for CK2-mediated Rev's phosphorylation.

The protein localises to the host nucleus. It localises to the host nucleolus. The protein resides in the host cytoplasm. Its function is as follows. Escorts unspliced or incompletely spliced viral pre-mRNAs (late transcripts) out of the nucleus of infected cells. These pre-mRNAs carry a recognition sequence called Rev responsive element (RRE) located in the env gene, that is not present in fully spliced viral mRNAs (early transcripts). This function is essential since most viral proteins are translated from unspliced or partially spliced pre-mRNAs which cannot exit the nucleus by the pathway used by fully processed cellular mRNAs. Rev itself is translated from a fully spliced mRNA that readily exits the nucleus. Rev's nuclear localization signal (NLS) binds directly to KPNB1/Importin beta-1 without previous binding to KPNA1/Importin alpha-1. KPNB1 binds to the GDP bound form of RAN (Ran-GDP) and targets Rev to the nucleus. In the nucleus, the conversion from Ran-GDP to Ran-GTP dissociates Rev from KPNB1 and allows Rev's binding to the RRE in viral pre-mRNAs. Rev multimerization on the RRE via cooperative assembly exposes its nuclear export signal (NES) to the surface. Rev can then form a complex with XPO1/CRM1 and Ran-GTP, leading to nuclear export of the complex. Conversion from Ran-GTP to Ran-GDP mediates dissociation of the Rev/RRE/XPO1/RAN complex, so that Rev can return to the nucleus for a subsequent round of export. Beside KPNB1, also seems to interact with TNPO1/Transportin-1, RANBP5/IPO5 and IPO7/RANBP7 for nuclear import. The nucleoporin-like HRB/RIP is an essential cofactor that probably indirectly interacts with Rev to release HIV RNAs from the perinuclear region to the cytoplasm. The protein is Protein Rev of Human immunodeficiency virus type 1 group M subtype B (isolate MN) (HIV-1).